Reading from the N-terminus, the 975-residue chain is Probable dipeptidyl-aminopeptidase B (975 aa).

A compositionally biased stretch (basic and acidic residues) spans Met-1–Leu-20. The segment at Met-1–Lys-111 is disordered. Residues Met-1–Arg-125 are Cytoplasmic-facing. Residues Ser-22 to Leu-31 are compositionally biased toward low complexity. Positions Leu-68 to Leu-84 are enriched in acidic residues. Residues Val-126 to Ile-146 form a helical; Signal-anchor for type II membrane protein membrane-spanning segment. Over Ser-147–Arg-975 the chain is Vacuolar. Asn-207, Asn-397, and Asn-622 each carry an N-linked (GlcNAc...) asparagine glycan. Ser-826 acts as the Charge relay system in catalysis. Asn-885 carries N-linked (GlcNAc...) asparagine glycosylation. Active-site charge relay system residues include Asp-903 and His-936.

It belongs to the peptidase S9B family.

The protein resides in the vacuole membrane. It catalyses the reaction Release of an N-terminal dipeptide, Xaa-Yaa-|-Zaa-, from a polypeptide, preferentially when Yaa is Pro, provided Zaa is neither Pro nor hydroxyproline.. In terms of biological role, type IV dipeptidyl-peptidase which removes N-terminal dipeptides sequentially from polypeptides having unsubstituted N-termini provided that the penultimate residue is proline. This chain is Probable dipeptidyl-aminopeptidase B (DAPB), found in Grosmannia clavigera (strain kw1407 / UAMH 11150) (Blue stain fungus).